Reading from the N-terminus, the 443-residue chain is Probable glucomannan 4-beta-mannosyltransferase 11 (443 aa).

Asp-52 is a catalytic residue. The substrate site is built by Asp-111 and Asp-113. Residue Asp-205 is part of the active site. Helical transmembrane passes span 284–304 (IIVH…SVFF), 321–341 (ITLF…FWVL), 400–420 (EMMV…FGKT), and 421–441 (VLYI…IGFI).

Belongs to the glycosyltransferase 2 family. Plant cellulose synthase-like A subfamily.

The protein resides in the golgi apparatus membrane. It catalyses the reaction GDP-mannose + (glucomannan)n = GDP + (glucomannan)n+1.. In terms of biological role, probable mannan synthase which consists of a 4-beta-mannosyltransferase activity on mannan using GDP-mannose. The beta-1,4-mannan product is the backbone for galactomannan synthesis by galactomannan galactosyltransferase. Galactomannan is a noncellulosic polysaccharides of plant cell wall. The chain is Probable glucomannan 4-beta-mannosyltransferase 11 from Arabidopsis thaliana (Mouse-ear cress).